The chain runs to 228 residues: DNA mismatch repair protein MutH (228 aa).

This sequence belongs to the MutH family.

The protein resides in the cytoplasm. Functionally, sequence-specific endonuclease that cleaves unmethylated GATC sequences. It is involved in DNA mismatch repair. The polypeptide is DNA mismatch repair protein MutH (Yersinia pseudotuberculosis serotype O:1b (strain IP 31758)).